A 469-amino-acid polypeptide reads, in one-letter code: Relaxin-3 receptor 1 (469 aa).

Residues 1–81 (MQMADAATIA…ESADTEARVR (81 aa)) are Extracellular-facing. 2 N-linked (GlcNAc...) asparagine glycosylation sites follow: Asn-36 and Asn-40. Residues 82–102 (ILISVVYWVVCALGLAGNLLV) traverse the membrane as a helical segment. The Cytoplasmic segment spans residues 103 to 119 (LYLMKSMQGWRKSSINL). A helical transmembrane segment spans residues 120 to 140 (FVTNLALTDFQFVLTLPFWAV). At 141–156 (ENALDFKWPFGKAMCK) the chain is on the extracellular side. Cys-155 and Cys-247 are oxidised to a cystine. Residues 157–177 (IVSMVTSMNMYASVFFLTAMS) traverse the membrane as a helical segment. Over 178 to 215 (VTRYHSVASALKSHRTRGHGRGDCCGRSLGDSCCFSAK) the chain is Cytoplasmic. Residues 216-236 (ALCVWIWALAALASLPSAIFS) traverse the membrane as a helical segment. Topologically, residues 237 to 270 (TTVKVMGEELCLVRFPDKLLGRDRQFWLGLYHSQ) are extracellular. The helical transmembrane segment at 271–291 (KVLLGFVLPLGIIILCYLLLV) threads the bilayer. Residues 292-329 (RFIADRRAAGTKGGAAVAGGRPTGASARRLSKVTKSVT) are Cytoplasmic-facing. The chain crosses the membrane as a helical span at residues 330-350 (IVVLSFFLCWLPNQALTTWSI). At 351-356 (LIKFNA) the chain is on the extracellular side. A helical transmembrane segment spans residues 357–377 (VPFSQEYFLCQVYAFPVSVCL). Topologically, residues 378–469 (AHSNSCLNPV…YDLLPSSSAY (92 aa)) are cytoplasmic.

The protein belongs to the G-protein coupled receptor 1 family. As to expression, expressed predominantly in brain regions. Highest expression in substantia nigra and pituitary, followed by hippocampus, spinal cord, amygdala, caudate nucleus and corpus callosum, quite low level in cerebellum. In peripheral tissues, relatively high levels in adrenal glands, low levels in pancreas, salivary gland, placenta, mammary gland and testis.

The protein resides in the cell membrane. Receptor for RNL3/relaxin-3. Binding of the ligand inhibit cAMP accumulation. The sequence is that of Relaxin-3 receptor 1 (RXFP3) from Homo sapiens (Human).